Consider the following 304-residue polypeptide: MDKDLTYQIKELKKEKNAIILAHFYQPPEIQELADAVGDSYYLSEIARDCKEEVVVFCGVRFMGESAKILSPEKTVLMPVSNAGCAMADMVDEEGVIKLKQQYPNALVVCYINSTAKVKAHCDVSVTSSSAIKILENIDNKEIIFLPDKNLGGYIAEQFPDKNFIFWDGYCKYHNNIRAEEIIELKDKYKNAEVLVHPECKKEIRDLGDYVGSTSGIIKYATNSKNKDFIIATEEGILHELKKNNPNKNFYIPGGKILCTDMKKTTLENLYSTLKNMENEVIVEDEIMEKALNSLLNMHKLAEG.

Residues H23 and S40 each contribute to the iminosuccinate site. C85 is a [4Fe-4S] cluster binding site. Iminosuccinate is bound by residues 111 to 113 and S128; that span reads YIN. C171 serves as a coordination point for [4Fe-4S] cluster. Iminosuccinate is bound by residues 197-199 and T214; that span reads HPE. Residue C259 participates in [4Fe-4S] cluster binding.

This sequence belongs to the quinolinate synthase family. Type 2 subfamily. Requires [4Fe-4S] cluster as cofactor.

Its subcellular location is the cytoplasm. It carries out the reaction iminosuccinate + dihydroxyacetone phosphate = quinolinate + phosphate + 2 H2O + H(+). It functions in the pathway cofactor biosynthesis; NAD(+) biosynthesis; quinolinate from iminoaspartate: step 1/1. In terms of biological role, catalyzes the condensation of iminoaspartate with dihydroxyacetone phosphate to form quinolinate. In Clostridioides difficile (strain 630) (Peptoclostridium difficile), this protein is Quinolinate synthase.